A 98-amino-acid polypeptide reads, in one-letter code: NADH-ubiquinone oxidoreductase chain 4L (98 aa).

3 helical membrane-spanning segments follow: residues 1-21 (MSPMYFSFSSAFMLGLMGLAF), 26-46 (LLSALLCLEGMMLTLFVATAT), and 58-78 (ILPMILLTFSACEASAGLAIL).

This sequence belongs to the complex I subunit 4L family.

The protein resides in the mitochondrion membrane. The catalysed reaction is a ubiquinone + NADH + 5 H(+)(in) = a ubiquinol + NAD(+) + 4 H(+)(out). In terms of biological role, core subunit of the mitochondrial membrane respiratory chain NADH dehydrogenase (Complex I) which catalyzes electron transfer from NADH through the respiratory chain, using ubiquinone as an electron acceptor. Part of the enzyme membrane arm which is embedded in the lipid bilayer and involved in proton translocation. The chain is NADH-ubiquinone oxidoreductase chain 4L (MT-ND4L) from Scyliorhinus canicula (Small-spotted catshark).